The sequence spans 446 residues: Argininosuccinate lyase (446 aa).

This sequence belongs to the lyase 1 family. Argininosuccinate lyase subfamily.

The protein resides in the cytoplasm. It carries out the reaction 2-(N(omega)-L-arginino)succinate = fumarate + L-arginine. It participates in amino-acid biosynthesis; L-arginine biosynthesis; L-arginine from L-ornithine and carbamoyl phosphate: step 3/3. The chain is Argininosuccinate lyase from Sulfurisphaera tokodaii (strain DSM 16993 / JCM 10545 / NBRC 100140 / 7) (Sulfolobus tokodaii).